A 537-amino-acid polypeptide reads, in one-letter code: Polyadenylate-binding protein 6 (537 aa).

RRM domains follow at residues 21–99, 112–188, 202–279, and 304–381; these read GSLY…WSQR, ANLY…KFIN, TNVY…KALK, and SNLY…VAER. Positions 503-537 are disordered; it reads KATTSEENRKEERRLTLSGKLSPEVKVEESGKQLQ. Basic and acidic residues-rich tracts occupy residues 506-517 and 525-537; these read TSEENRKEERRL and PEVK…KQLQ.

Belongs to the polyadenylate-binding protein type-1 family. In terms of tissue distribution, expressed at low levels in leaves and young seedlings.

The protein localises to the cytoplasm. Its subcellular location is the nucleus. In terms of biological role, binds the poly(A) tail of mRNA. Appears to be an important mediator of the multiple roles of the poly(A) tail in mRNA biogenesis, stability and translation. The sequence is that of Polyadenylate-binding protein 6 (PAB6) from Arabidopsis thaliana (Mouse-ear cress).